A 206-amino-acid polypeptide reads, in one-letter code: Dehydration-responsive element-binding protein 2D (206 aa).

The tract at residues 13–40 (ANKKQRTVQASSRKGCMRGKGGPDNASC) is disordered. The segment at residues 41-98 (TYKGVRQRTWGKWVAEIREPNRGARLWLGTFDTSREAALAYDSAARKLYGPEAHLNLP) is a DNA-binding region (AP2/ERF). Residues 102-139 (RSYPKTASSPASQTTPSSNTGGKSSSDSESPCSSNEMS) form a disordered region. The segment covering 107 to 139 (TASSPASQTTPSSNTGGKSSSDSESPCSSNEMS) has biased composition (low complexity).

This sequence belongs to the AP2/ERF transcription factor family. ERF subfamily.

The protein localises to the nucleus. Its function is as follows. Putative transcriptional activator that binds specifically to the DNA sequence 5'-[AG]CCGAC-3'. Binding to the C-repeat/DRE element mediates high salinity-inducible transcription. The polypeptide is Dehydration-responsive element-binding protein 2D (DREB2D) (Arabidopsis thaliana (Mouse-ear cress)).